The following is a 787-amino-acid chain: Ribonucleoside-diphosphate reductase large subunit (787 aa).

Substrate is bound by residues Thr-209, 224–225, Gly-255, 436–440, and 618–622; these read SC, NLCTE, and PTVSS. Cysteines 225 and 453 form a disulfide. Asn-436 serves as the catalytic Proton acceptor. Residue Cys-438 is the Cysteine radical intermediate of the active site. The Proton acceptor role is filled by Glu-440.

It belongs to the ribonucleoside diphosphate reductase large chain family. As to quaternary structure, heterotetramer composed of a homodimer of the large subunit (R1) and a homodimer of the small subunit (R2). Larger multisubunit protein complex are also active, composed of (R1)n(R2)n.

The catalysed reaction is a 2'-deoxyribonucleoside 5'-diphosphate + [thioredoxin]-disulfide + H2O = a ribonucleoside 5'-diphosphate + [thioredoxin]-dithiol. Ribonucleoside-diphosphate reductase holoenzyme provides the precursors necessary for viral DNA synthesis. Allows virus growth in non-dividing cells, as well as reactivation from latency in infected hosts. Catalyzes the biosynthesis of deoxyribonucleotides from the corresponding ribonucleotides. The sequence is that of Ribonucleoside-diphosphate reductase large subunit from Bos taurus (Bovine).